A 1121-amino-acid polypeptide reads, in one-letter code: Phytochrome 2 (1121 aa).

Positions Asp214–Val393 constitute a GAF domain. Phytochromobilin is bound at residue Cys319. 2 PAS domains span residues Val608 to Glu679 and Asp742 to Met813. Residues Tyr893–Gln1113 form the Histidine kinase domain.

Belongs to the phytochrome family. In terms of assembly, homodimer. Contains one covalently linked phytochromobilin chromophore.

Its function is as follows. Regulatory photoreceptor which exists in two forms that are reversibly interconvertible by light: the Pr form that absorbs maximally in the red region of the spectrum and the Pfr form that absorbs maximally in the far-red region. Photoconversion of Pr to Pfr induces an array of morphogenic responses, whereas reconversion of Pfr to Pr cancels the induction of those responses. Pfr controls the expression of a number of nuclear genes including those encoding the small subunit of ribulose-bisphosphate carboxylase, chlorophyll A/B binding protein, protochlorophyllide reductase, rRNA, etc. It also controls the expression of its own gene(s) in a negative feedback fashion. The polypeptide is Phytochrome 2 (PHY2) (Ceratodon purpureus (Fire moss)).